The primary structure comprises 684 residues: Threonine--tRNA ligase (684 aa).

The TGS domain occupies M1–E60. Residues D256 to P567 form a catalytic region. The Zn(2+) site is built by C361, H412, and H544.

Belongs to the class-II aminoacyl-tRNA synthetase family. In terms of assembly, homodimer. Zn(2+) is required as a cofactor.

The protein resides in the cytoplasm. The catalysed reaction is tRNA(Thr) + L-threonine + ATP = L-threonyl-tRNA(Thr) + AMP + diphosphate + H(+). Functionally, catalyzes the attachment of threonine to tRNA(Thr) in a two-step reaction: L-threonine is first activated by ATP to form Thr-AMP and then transferred to the acceptor end of tRNA(Thr). Also edits incorrectly charged L-seryl-tRNA(Thr). In Cutibacterium acnes (strain DSM 16379 / KPA171202) (Propionibacterium acnes), this protein is Threonine--tRNA ligase.